We begin with the raw amino-acid sequence, 210 residues long: Glycerol-3-phosphate acyltransferase 2 (210 aa).

Helical transmembrane passes span 4–24, 54–74, 82–102, 114–134, 141–161, and 163–183; these read LIMVIIALIAAYFIGSTPAPY, FWPGILVLAVDIGKGALAMAV, LGIQMLCALMAIAGHNYPVWL, IGILAYLMPEGIPIYIACFLV, FPTLSYGISFLSFILVAWLGQ, and DLGKVLFSLLVVMIPIIMYIP.

Belongs to the PlsY family. As to quaternary structure, probably interacts with PlsX.

It localises to the cell membrane. It catalyses the reaction an acyl phosphate + sn-glycerol 3-phosphate = a 1-acyl-sn-glycero-3-phosphate + phosphate. Its pathway is lipid metabolism; phospholipid metabolism. In terms of biological role, catalyzes the transfer of an acyl group from acyl-phosphate (acyl-PO(4)) to glycerol-3-phosphate (G3P) to form lysophosphatidic acid (LPA). This enzyme utilizes acyl-phosphate as fatty acyl donor, but not acyl-CoA or acyl-ACP. The polypeptide is Glycerol-3-phosphate acyltransferase 2 (Dehalococcoides mccartyi (strain ATCC BAA-2266 / KCTC 15142 / 195) (Dehalococcoides ethenogenes (strain 195))).